Reading from the N-terminus, the 215-residue chain is Ribosome maturation factor RimP (215 aa).

The disordered stretch occupies residues Lys180–Ser215. Residues Pro195–Ala207 show a composition bias toward acidic residues.

This sequence belongs to the RimP family.

It localises to the cytoplasm. Required for maturation of 30S ribosomal subunits. The protein is Ribosome maturation factor RimP of Mesorhizobium japonicum (strain LMG 29417 / CECT 9101 / MAFF 303099) (Mesorhizobium loti (strain MAFF 303099)).